A 343-amino-acid chain; its full sequence is Ferredoxin--NADP reductase (343 aa).

FAD-binding residues include cysteine 18, aspartate 37, glutamine 45, tyrosine 50, valine 90, phenylalanine 125, aspartate 290, and threonine 331.

It belongs to the ferredoxin--NADP reductase type 2 family. Homodimer. FAD is required as a cofactor.

The enzyme catalyses 2 reduced [2Fe-2S]-[ferredoxin] + NADP(+) + H(+) = 2 oxidized [2Fe-2S]-[ferredoxin] + NADPH. The polypeptide is Ferredoxin--NADP reductase (Parvibaculum lavamentivorans (strain DS-1 / DSM 13023 / NCIMB 13966)).